The primary structure comprises 461 residues: L-seryl-tRNA(Sec) selenium transferase (461 aa).

Lys291 carries the N6-(pyridoxal phosphate)lysine modification.

The protein belongs to the SelA family. It depends on pyridoxal 5'-phosphate as a cofactor.

It localises to the cytoplasm. The enzyme catalyses L-seryl-tRNA(Sec) + selenophosphate + H(+) = L-selenocysteinyl-tRNA(Sec) + phosphate. The protein operates within aminoacyl-tRNA biosynthesis; selenocysteinyl-tRNA(Sec) biosynthesis; selenocysteinyl-tRNA(Sec) from L-seryl-tRNA(Sec) (bacterial route): step 1/1. Functionally, converts seryl-tRNA(Sec) to selenocysteinyl-tRNA(Sec) required for selenoprotein biosynthesis. This Caldanaerobacter subterraneus subsp. tengcongensis (strain DSM 15242 / JCM 11007 / NBRC 100824 / MB4) (Thermoanaerobacter tengcongensis) protein is L-seryl-tRNA(Sec) selenium transferase.